A 221-amino-acid chain; its full sequence is Phosphatidylethanolamine-binding protein homolog F40A3.3 (221 aa).

Belongs to the phosphatidylethanolamine-binding protein family.

This is Phosphatidylethanolamine-binding protein homolog F40A3.3 from Caenorhabditis elegans.